Consider the following 635-residue polypeptide: Probable extracellular metalloproteinase 1 (635 aa).

Positions methionine 1–alanine 19 are cleaved as a signal peptide. A propeptide spanning residues histidine 20–histidine 246 is cleaved from the precursor. A glycan (N-linked (GlcNAc...) asparagine) is linked at asparagine 287. Histidine 430 is a Zn(2+) binding site. Residue glutamate 431 is part of the active site. Histidine 434 is a Zn(2+) binding site. N-linked (GlcNAc...) asparagine glycosylation is found at asparagine 475, asparagine 594, and asparagine 623.

This sequence belongs to the peptidase M36 family. Zn(2+) serves as cofactor.

The protein resides in the secreted. Functionally, secreted metalloproteinase probably acting as a virulence factor. This chain is Probable extracellular metalloproteinase 1 (MEP1), found in Trichophyton verrucosum (strain HKI 0517).